We begin with the raw amino-acid sequence, 486 residues long: Malonate-semialdehyde dehydrogenase (486 aa).

NAD(+)-binding residues include Phe154, Lys178, Glu181, Arg182, and Ser231. Residue Cys286 is the Nucleophile of the active site. Glu386 lines the NAD(+) pocket.

It belongs to the aldehyde dehydrogenase family. IolA subfamily. In terms of assembly, homotetramer.

The enzyme catalyses 3-oxopropanoate + NAD(+) + CoA + H2O = hydrogencarbonate + acetyl-CoA + NADH + H(+). The catalysed reaction is 2-methyl-3-oxopropanoate + NAD(+) + CoA + H2O = propanoyl-CoA + hydrogencarbonate + NADH + H(+). Its pathway is polyol metabolism; myo-inositol degradation into acetyl-CoA; acetyl-CoA from myo-inositol: step 7/7. Catalyzes the oxidation of malonate semialdehyde (MSA) and methylmalonate semialdehyde (MMSA) into acetyl-CoA and propanoyl-CoA, respectively. Is involved in a myo-inositol catabolic pathway. Bicarbonate, and not CO2, is the end-product of the enzymatic reaction. The chain is Malonate-semialdehyde dehydrogenase from Bacillus cereus (strain ATCC 10987 / NRS 248).